The following is a 42-amino-acid chain: Photosystem I reaction center subunit IX (42 aa).

The helical transmembrane segment at 7–27 threads the bilayer; it reads YLSVAPVLSTLWFGALAGLLI.

This sequence belongs to the PsaJ family.

It localises to the plastid. Its subcellular location is the chloroplast thylakoid membrane. In terms of biological role, may help in the organization of the PsaE and PsaF subunits. This Agrostis stolonifera (Creeping bentgrass) protein is Photosystem I reaction center subunit IX.